A 556-amino-acid chain; its full sequence is ATP synthase subunit beta-1, mitochondrial (556 aa).

Positions 1-20 (MASRRVLSSLLRSSSGRSAA) are enriched in low complexity. The segment at 1 to 37 (MASRRVLSSLLRSSSGRSAAKLGNRNPRLPSPSPARH) is disordered. A mitochondrion-targeting transit peptide spans 1 to 51 (MASRRVLSSLLRSSSGRSAAKLGNRNPRLPSPSPARHAAPCSYLLGRVAEY). The residue at position 59 (S59) is a Phosphoserine. 231-238 (GGAGVGKT) lines the ATP pocket.

Belongs to the ATPase alpha/beta chains family. As to quaternary structure, F-type ATPases have 2 components, CF(1) - the catalytic core - and CF(0) - the membrane proton channel. CF(1) has five subunits: alpha(3), beta(3), gamma(1), delta(1), epsilon(1). CF(0) has three main subunits: a, b and c.

It is found in the mitochondrion. The protein resides in the mitochondrion inner membrane. It carries out the reaction ATP + H2O + 4 H(+)(in) = ADP + phosphate + 5 H(+)(out). Functionally, mitochondrial membrane ATP synthase (F(1)F(0) ATP synthase or Complex V) produces ATP from ADP in the presence of a proton gradient across the membrane which is generated by electron transport complexes of the respiratory chain. F-type ATPases consist of two structural domains, F(1) - containing the extramembraneous catalytic core, and F(0) - containing the membrane proton channel, linked together by a central stalk and a peripheral stalk. During catalysis, ATP synthesis in the catalytic domain of F(1) is coupled via a rotary mechanism of the central stalk subunits to proton translocation. Subunits alpha and beta form the catalytic core in F(1). Rotation of the central stalk against the surrounding alpha(3)beta(3) subunits leads to hydrolysis of ATP in three separate catalytic sites on the beta subunits. The sequence is that of ATP synthase subunit beta-1, mitochondrial from Arabidopsis thaliana (Mouse-ear cress).